A 59-amino-acid polypeptide reads, in one-letter code: Large ribosomal subunit protein bL32c (59 aa).

The interval 36 to 59 (KSRSFSGVSEHPKPKGFSRQQTNK) is disordered.

This sequence belongs to the bacterial ribosomal protein bL32 family.

The protein resides in the plastid. Its subcellular location is the chloroplast. The sequence is that of Large ribosomal subunit protein bL32c from Oryza nivara (Indian wild rice).